The following is a 206-amino-acid chain: Large ribosomal subunit protein uL4 (206 aa).

The tract at residues 46-77 is disordered; sequence GTRAQKDREQVKHSTKKPFKQKGTGNARAGMT.

The protein belongs to the universal ribosomal protein uL4 family. In terms of assembly, part of the 50S ribosomal subunit.

Its function is as follows. One of the primary rRNA binding proteins, this protein initially binds near the 5'-end of the 23S rRNA. It is important during the early stages of 50S assembly. It makes multiple contacts with different domains of the 23S rRNA in the assembled 50S subunit and ribosome. Forms part of the polypeptide exit tunnel. This chain is Large ribosomal subunit protein uL4, found in Acidovorax ebreus (strain TPSY) (Diaphorobacter sp. (strain TPSY)).